Here is a 531-residue protein sequence, read N- to C-terminus: Polypyrimidine tract-binding protein 2 (531 aa).

Met-1 bears the N-acetylmethionine mark. Phosphoserine is present on residues Ser-26 and Ser-27. RRM domains lie at 59–133 and 181–257; these read RVLH…YSNH and LRII…FSKL. The residue at position 308 (Ser-308) is a Phosphoserine. 2 RRM domains span residues 338–412 and 455–529; these read TVLL…LSKH and ATLH…FSKS.

In terms of assembly, monomer. Interacts with NOVA1; the interaction is direct. Identified in a mRNP complex, at least composed of DHX9, DDX3X, ELAVL1, HNRNPU, IGF2BP1, ILF3, PABPC1, PCBP2, PTBP2, STAU1, STAU2, SYNCRIP and YBX1. Part of a ternary complex containing KHSRP and HNRPH1. Interacts with NOVA2; the interaction is direct.

The protein resides in the nucleus. Functionally, RNA-binding protein which binds to intronic polypyrimidine tracts and mediates negative regulation of exons splicing. May antagonize in a tissue-specific manner the ability of NOVA1 to activate exon selection. In addition to its function in pre-mRNA splicing, plays also a role in the regulation of translation. This Rattus norvegicus (Rat) protein is Polypyrimidine tract-binding protein 2.